The chain runs to 169 residues: Interleukin-36 gamma (169 aa).

A propeptide spanning residues 1–17 (MRGTPGDADGGGRAVYQ) is cleaved from the precursor.

The protein belongs to the IL-1 family. In terms of assembly, interacts with cargo receptor TMED10; the interaction mediates the translocation from the cytoplasm into the ERGIC (endoplasmic reticulum-Golgi intermediate compartment) and thereby secretion. N-terminal truncation leads to a dramatic enhancement of its activity (&gt;1000-fold). Proteolytically cleaved by cathepsin CTSG. In terms of tissue distribution, highly expressed in tissues containing epithelial cells: skin, lung, stomach and esophagus. Expressed in bronchial epithelial. In skin is expressed only in keratinocytes but not in fibroblasts, endothelial cells or melanocytes. Up-regulated in lesional psoriasis skin. Expressed in monocyte-derived dendritic cells and M1 macrophages.

The protein resides in the cytoplasm. The protein localises to the secreted. Cytokine that binds to and signals through the IL1RL2/IL-36R receptor which in turn activates NF-kappa-B and MAPK signaling pathways in target cells. Part of the IL-36 signaling system that is thought to be present in epithelial barriers and to take part in local inflammatory response; similar to the IL-1 system with which it shares the coreceptor IL1RAP. Seems to be involved in skin inflammatory response by acting on keratinocytes, dendritic cells and indirectly on T-cells to drive tissue infiltration, cell maturation and cell proliferation. In cultured keratinocytes induces the expression of macrophage, T-cell, and neutrophil chemokines, such as CCL3, CCL4, CCL5, CCL2, CCL17, CCL22, CL20, CCL5, CCL2, CCL17, CCL22, CXCL8, CCL20 and CXCL1; also stimulates its own expression and that of the prototypic cutaneous pro-inflammatory parameters TNF-alpha, S100A7/psoriasin and inducible NOS. May play a role in pro-inflammatory responses during particular neutrophilic airway inflammation: activates mitogen-activated protein kinases and NF-kappa B in primary lung fibroblasts, and stimulates the expression of IL-8 and CXCL3 and Th17 chemokine CCL20 in lung fibroblasts. May be involved in the innate immune response to fungal pathogens, such as Aspergillus fumigatus. In Homo sapiens (Human), this protein is Interleukin-36 gamma.